A 158-amino-acid chain; its full sequence is Curculin-2 (158 aa).

Residues 1–22 (MAAKFLLTILVTFAAVASLGMA) form the signal peptide. The Bulb-type lectin domain maps to 23-131 (DSVLLSGQTL…VLWPLGLNGC (109 aa)). A disulfide bridge connects residues Cys51 and Cys74. N-linked (GlcNAc...) asparagine glycosylation occurs at Asn103. A propeptide spanning residues 136 to 158 (GEITVAKDSTEPQHEDIKMVINN) is cleaved from the precursor.

In terms of assembly, heterodimer with curculin-1; Disulfide-linked.

In terms of biological role, taste-modifying protein; sweet-tasting. After curculin, water elicits a sweet taste, and sour substances induce a stronger sense of sweetness. The protein is Curculin-2 of Molineria latifolia (Lumbah).